Reading from the N-terminus, the 261-residue chain is Triosephosphate isomerase (261 aa).

10 to 12 (NWK) serves as a coordination point for substrate. The active-site Electrophile is the H100. Residue E172 is the Proton acceptor of the active site. Substrate is bound by residues G178, S218, and 239 to 240 (GG).

It belongs to the triosephosphate isomerase family. Homodimer.

Its subcellular location is the cytoplasm. It catalyses the reaction D-glyceraldehyde 3-phosphate = dihydroxyacetone phosphate. Its pathway is carbohydrate biosynthesis; gluconeogenesis. It functions in the pathway carbohydrate degradation; glycolysis; D-glyceraldehyde 3-phosphate from glycerone phosphate: step 1/1. Involved in the gluconeogenesis. Catalyzes stereospecifically the conversion of dihydroxyacetone phosphate (DHAP) to D-glyceraldehyde-3-phosphate (G3P). The chain is Triosephosphate isomerase from Saccharopolyspora erythraea (strain ATCC 11635 / DSM 40517 / JCM 4748 / NBRC 13426 / NCIMB 8594 / NRRL 2338).